A 1762-amino-acid chain; its full sequence is Lysine-specific demethylase 3B (1762 aa).

The residue at position 2 (alanine 2) is an N-acetylalanine. Disordered regions lie at residues 253-350 (MDSS…FVPQ) and 426-468 (TTAS…NSSL). A compositionally biased stretch (basic and acidic residues) spans 299-310 (ATKKLKGDRGEV). The segment covering 426–435 (TTASSTPTTV) has biased composition (low complexity). Positions 453 to 465 (GSWSQASGENSRN) are enriched in polar residues. Serine 493, serine 547, serine 557, and serine 561 each carry phosphoserine. The disordered stretch occupies residues 574–613 (SVLGADTQPGPKAGSSVDRKVPAESMPTLTPAFPRSLLNT). The residue at position 615 (threonine 615) is a Phosphothreonine. Over residues 713–746 (TGSPSLSAVGNGRSSSPTNSLTQPIEMPTLSSSP) the composition is skewed to polar residues. Residues 713–763 (TGSPSLSAVGNGRSSSPTNSLTQPIEMPTLSSSPTEERPTVGPGQQDNPLL) form a disordered region. Phosphoserine is present on residues serine 767, serine 774, and serine 779. Residue lysine 789 forms a Glycyl lysine isopeptide (Lys-Gly) (interchain with G-Cter in SUMO2) linkage. Serine 799 carries the phosphoserine modification. The tract at residues 806–853 (ACRQDSDSSTNSDLSDLSDSEEQLQAKSGLKGIPEHLMGKLGPNGERS) is disordered. Residues 1032-1057 (CDVCETTLFNIHWVCRKCGFGVCLDC) form a C6-type zinc finger. Polar residues predominate over residues 1146–1163 (QLPSVTPSASSGNETTFS). The segment at 1146 to 1217 (QLPSVTPSAS…AIRPPCPDTA (72 aa)) is disordered. Residues serine 1254 and serine 1260 each carry the phosphoserine modification. The interval 1285 to 1306 (SNSKTEGSSLRDLLHSGPGKLP) is disordered. The LXXLL motif motif lies at 1294 to 1298 (LRDLL). The JmjC domain occupies 1499–1722 (MPTRFEDLME…HCFRLTQEFR (224 aa)). Fe cation contacts are provided by histidine 1561, aspartate 1563, and histidine 1690.

Belongs to the JHDM2 histone demethylase family. Fe(2+) serves as cofactor.

Its subcellular location is the nucleus. It catalyses the reaction N(6),N(6)-dimethyl-L-lysyl(9)-[histone H3] + 2 2-oxoglutarate + 2 O2 = L-lysyl(9)-[histone H3] + 2 formaldehyde + 2 succinate + 2 CO2. In terms of biological role, histone demethylase that specifically demethylates 'Lys-9' of histone H3, thereby playing a central role in histone code. Demethylation of Lys residue generates formaldehyde and succinate May have tumor suppressor activity. The polypeptide is Lysine-specific demethylase 3B (Kdm3b) (Mus musculus (Mouse)).